A 283-amino-acid polypeptide reads, in one-letter code: Pantothenate synthetase (283 aa).

An ATP-binding site is contributed by 30 to 37 (MGYLHEGH). The active-site Proton donor is the H37. Q61 serves as a coordination point for (R)-pantoate. Position 61 (Q61) interacts with beta-alanine. 147–150 (GQKD) serves as a coordination point for ATP. A (R)-pantoate-binding site is contributed by Q153. ATP-binding positions include V176 and 184–187 (MSSR).

The protein belongs to the pantothenate synthetase family. In terms of assembly, homodimer.

The protein localises to the cytoplasm. It catalyses the reaction (R)-pantoate + beta-alanine + ATP = (R)-pantothenate + AMP + diphosphate + H(+). Its pathway is cofactor biosynthesis; (R)-pantothenate biosynthesis; (R)-pantothenate from (R)-pantoate and beta-alanine: step 1/1. In terms of biological role, catalyzes the condensation of pantoate with beta-alanine in an ATP-dependent reaction via a pantoyl-adenylate intermediate. The sequence is that of Pantothenate synthetase from Thermoanaerobacter sp. (strain X514).